The primary structure comprises 332 residues: L-lactate dehydrogenase A chain (332 aa).

NAD(+) is bound by residues glycine 29 to lysine 57 and arginine 99. Substrate is bound by residues arginine 106, asparagine 138, and arginine 169. An NAD(+)-binding site is contributed by asparagine 138. The Proton acceptor role is filled by histidine 193. Threonine 248 provides a ligand contact to substrate.

The protein belongs to the LDH/MDH superfamily. LDH family. As to quaternary structure, homotetramer.

It localises to the cytoplasm. It catalyses the reaction (S)-lactate + NAD(+) = pyruvate + NADH + H(+). Its pathway is fermentation; pyruvate fermentation to lactate; (S)-lactate from pyruvate: step 1/1. Interconverts simultaneously and stereospecifically pyruvate and lactate with concomitant interconversion of NADH and NAD(+). The protein is L-lactate dehydrogenase A chain (LDHA) of Trachemys scripta elegans (Red-eared slider turtle).